A 268-amino-acid polypeptide reads, in one-letter code: MSSKVHLGHTARKRFGQNFLTDDNVINRIVGAIAPDNDHVMVEIGPGLGALTEPVATAIDNLTVVELDRDLVERLQNHPVLKDKLTIHQGDALQFDFSQLVVPGKKLKVFGNLPYNISTPLMFHLFEFAEQIETMHFMLQKEVVLRLSASPGTKAYGRLTVMAQYFCQVVPVLEVPPHSFAPPPKVDSAVVRLLPYAEKPFPCKDVNVLRQLCTTAFNMRRKTLRNNLKQVLSDEEFEQLGIDQNLRPEQISVEQYVAMANMVCDKQA.

Residues N18, L20, G45, E66, D91, and N112 each contribute to the S-adenosyl-L-methionine site.

Belongs to the class I-like SAM-binding methyltransferase superfamily. rRNA adenine N(6)-methyltransferase family. RsmA subfamily.

The protein resides in the cytoplasm. It catalyses the reaction adenosine(1518)/adenosine(1519) in 16S rRNA + 4 S-adenosyl-L-methionine = N(6)-dimethyladenosine(1518)/N(6)-dimethyladenosine(1519) in 16S rRNA + 4 S-adenosyl-L-homocysteine + 4 H(+). In terms of biological role, specifically dimethylates two adjacent adenosines (A1518 and A1519) in the loop of a conserved hairpin near the 3'-end of 16S rRNA in the 30S particle. May play a critical role in biogenesis of 30S subunits. The polypeptide is Ribosomal RNA small subunit methyltransferase A (Shewanella oneidensis (strain ATCC 700550 / JCM 31522 / CIP 106686 / LMG 19005 / NCIMB 14063 / MR-1)).